Consider the following 1178-residue polypeptide: DNA-directed RNA polymerase subunit beta (1178 aa).

A disordered region spans residues 1–37 (MLEGCILADSRQSKTAASPSPSRPQSSSNNSVPGAPN). Positions 18–33 (SPSPSRPQSSSNNSVP) are enriched in low complexity.

This sequence belongs to the RNA polymerase beta chain family. As to quaternary structure, the RNAP catalytic core consists of 2 alpha, 1 beta, 1 beta' and 1 omega subunit. When a sigma factor is associated with the core the holoenzyme is formed, which can initiate transcription.

It carries out the reaction RNA(n) + a ribonucleoside 5'-triphosphate = RNA(n+1) + diphosphate. Functionally, DNA-dependent RNA polymerase catalyzes the transcription of DNA into RNA using the four ribonucleoside triphosphates as substrates. The protein is DNA-directed RNA polymerase subunit beta of Mycobacterium tuberculosis (strain CDC 1551 / Oshkosh).